Consider the following 216-residue polypeptide: Minor capsid protein P6 (216 aa).

The interval 1–21 (MILVGIAVLILLAVFAILYYK) is hydrophobic.

As to quaternary structure, interacts with the major capsid protein.

It is found in the virion. Its function is as follows. One of the minor capsid proteins that constitute a network internal to the major capsid proteins and outside the lipid membrane. The minor capsid proteins glue and stabilize the capsomers. The sequence is that of Minor capsid protein P6 from Paramecium bursaria Chlorella virus 1 (PBCV-1).